The chain runs to 541 residues: Tryptophan N-monooxygenase 1 (541 aa).

Residues 21 to 41 (FSTLYLLSTLQAFVAITLVML) form a helical membrane-spanning segment. A heme-binding site is contributed by Cys477.

This sequence belongs to the cytochrome P450 family. It depends on heme as a cofactor. In terms of tissue distribution, found in all tissues tested. Highest expression in roots, and low expression in stem.

The protein resides in the membrane. It catalyses the reaction L-tryptophan + 2 reduced [NADPH--hemoprotein reductase] + 2 O2 = (E)-(indol-3-yl)acetaldehyde oxime + 2 oxidized [NADPH--hemoprotein reductase] + CO2 + 3 H2O + 2 H(+). Its function is as follows. Converts tryptophan to indole-3-acetaldoxime, a precursor for tryptophan-derived glucosinolates and indole-3-acetic acid (IAA). Involved in the biosynthetic pathway to 4-hydroxyindole-3-carbonyl nitrile (4-OH-ICN), a cyanogenic metabolite required for inducible pathogen defense. This Arabidopsis thaliana (Mouse-ear cress) protein is Tryptophan N-monooxygenase 1 (CYP79B2).